The sequence spans 215 residues: Wtf element wtf7 (215 aa).

Residues 1–21 are disordered; the sequence is MSGSYAPIEDSADELSVHSGN. The next 3 membrane-spanning stretches (helical) occupy residues 119 to 139, 149 to 169, and 189 to 209; these read LAQS…CLFF, LMGW…SFIL, and LILF…YALY.

Belongs to the WTF family.

Its subcellular location is the spore membrane. In terms of biological role, may act in meiotic drive. This is Wtf element wtf7 from Schizosaccharomyces pombe (strain 972 / ATCC 24843) (Fission yeast).